The sequence spans 595 residues: Phosphomethylpyrimidine synthase (595 aa).

The span at 97-120 shows a compositional bias: basic and acidic residues; sequence GRDVRPEDNGFTKDDDPRAAREVF. The segment at 97–134 is disordered; sequence GRDVRPEDNGFTKDDDPRAAREVFPRTSSHKPLRAKKG. Basic residues predominate over residues 124–133; that stretch reads SSHKPLRAKK. Substrate contacts are provided by residues Asn-202, Met-231, Tyr-260, His-296, 316–318, 357–360, and Glu-396; these read SRG and DGLR. His-400 contributes to the Zn(2+) binding site. Position 423 (Tyr-423) interacts with substrate. His-464 contacts Zn(2+). [4Fe-4S] cluster-binding residues include Cys-544, Cys-547, and Cys-552.

Belongs to the ThiC family. It depends on [4Fe-4S] cluster as a cofactor.

It carries out the reaction 5-amino-1-(5-phospho-beta-D-ribosyl)imidazole + S-adenosyl-L-methionine = 4-amino-2-methyl-5-(phosphooxymethyl)pyrimidine + CO + 5'-deoxyadenosine + formate + L-methionine + 3 H(+). It participates in cofactor biosynthesis; thiamine diphosphate biosynthesis. Its function is as follows. Catalyzes the synthesis of the hydroxymethylpyrimidine phosphate (HMP-P) moiety of thiamine from aminoimidazole ribotide (AIR) in a radical S-adenosyl-L-methionine (SAM)-dependent reaction. The polypeptide is Phosphomethylpyrimidine synthase (Halalkalibacterium halodurans (strain ATCC BAA-125 / DSM 18197 / FERM 7344 / JCM 9153 / C-125) (Bacillus halodurans)).